Consider the following 397-residue polypeptide: Cysteine desulfurase (397 aa).

Pyridoxal 5'-phosphate-binding positions include N148, Q176, and 196–198 (SAH). Position 199 is an N6-(pyridoxal phosphate)lysine (K199). T234 provides a ligand contact to pyridoxal 5'-phosphate. C321 functions as the Cysteine persulfide intermediate in the catalytic mechanism. A [2Fe-2S] cluster-binding site is contributed by C321.

The protein belongs to the class-V pyridoxal-phosphate-dependent aminotransferase family. NifS/IscS subfamily. In terms of assembly, homodimer. Pyridoxal 5'-phosphate is required as a cofactor.

It carries out the reaction (sulfur carrier)-H + L-cysteine = (sulfur carrier)-SH + L-alanine. Its function is as follows. Catalyzes the removal of elemental sulfur atoms from cysteine to produce alanine. Seems to participate in the biosynthesis of the nitrogenase metalloclusters by providing the inorganic sulfur required for the Fe-S core formation. This chain is Cysteine desulfurase, found in Klebsiella pneumoniae.